Reading from the N-terminus, the 263-residue chain is Oxidoreductase UcpA (263 aa).

10–32 contacts NAD(+); sequence LITGALQGIGEGIARTFARHGAN. Serine 141 provides a ligand contact to substrate. Tyrosine 155 (proton acceptor) is an active-site residue.

This sequence belongs to the short-chain dehydrogenases/reductases (SDR) family.

This Escherichia coli O157:H7 protein is Oxidoreductase UcpA (ucpA).